The sequence spans 1216 residues: Apical endosomal glycoprotein (1216 aa).

Positions 1–21 are cleaved as a signal peptide; it reads MCLPSCLLSIWVLFMAAQSLG. Residues 22–1155 lie on the Extracellular side of the membrane; the sequence is KTWVPDHCRS…SQGRVAAPVS (1134 aa). Positions 27–54 constitute an LDL-receptor class A 1; truncated domain; that stretch reads DHCRSPTEATCNFVCDCGDCSDEAQCGF. One can recognise an MAM 1 domain in the interval 62 to 224; the sequence is NTPFTCNFEQ…DDMEFWDCGL (163 aa). An N-linked (GlcNAc...) asparagine glycan is attached at N205. The LDL-receptor class A 2 domain maps to 229 to 269; sequence ARCPLGHHHCQNKACVEPHQLCDGEDNCGDSSDEDPLICSH. 3 disulfide bridges follow: C231–C243, C238–C256, and C250–C267. The region spanning 268–427 is the MAM 2 domain; sequence SHHMATDFET…DLIMSNHCIL (160 aa). N-linked (GlcNAc...) asparagine glycans are attached at residues N291, N341, and N368. Positions 454-491 constitute an LDL-receptor class A 3 domain; it reads RTCDAGHLSCDELCVPPEQLCDFQQHCAEGEDEEKCGT. Cystine bridges form between C456–C467, C463–C480, and C474–C489. 4 MAM domains span residues 492-647, 654-813, 812-973, and 972-1142; these read TDFE…DCNP, DQEV…PCWA, WAAK…PCAQ, and AQPG…HCKQ. The N-linked (GlcNAc...) asparagine glycan is linked to N639. N839 is a glycosylation site (N-linked (GlcNAc...) asparagine). Residues 1156–1176 traverse the membrane as a helical segment; that stretch reads VPVAVGGALLLFLLLLGLGGW. Residues 1177–1216 lie on the Cytoplasmic side of the membrane; the sequence is HWLQKQHLPCQSTDAAASGFDNILFNADQVTLPESITSNP.

Apical endosomal tubules of developing rat intestinal epithelial cells.

The protein localises to the membrane. Its function is as follows. Probably involved in the sorting and selective transport of receptors and ligands across polarized epithelia. The protein is Apical endosomal glycoprotein (Mamdc4) of Rattus norvegicus (Rat).